A 184-amino-acid chain; its full sequence is SsrA-binding protein (184 aa).

The span at 1 to 11 shows a compositional bias: polar residues; sequence MAAKKSTPTDS. Residues 1–31 are disordered; it reads MAAKKSTPTDSGKSKGKKNKAQKGAGQKGAG.

Belongs to the SmpB family.

It is found in the cytoplasm. Its function is as follows. Required for rescue of stalled ribosomes mediated by trans-translation. Binds to transfer-messenger RNA (tmRNA), required for stable association of tmRNA with ribosomes. tmRNA and SmpB together mimic tRNA shape, replacing the anticodon stem-loop with SmpB. tmRNA is encoded by the ssrA gene; the 2 termini fold to resemble tRNA(Ala) and it encodes a 'tag peptide', a short internal open reading frame. During trans-translation Ala-aminoacylated tmRNA acts like a tRNA, entering the A-site of stalled ribosomes, displacing the stalled mRNA. The ribosome then switches to translate the ORF on the tmRNA; the nascent peptide is terminated with the 'tag peptide' encoded by the tmRNA and targeted for degradation. The ribosome is freed to recommence translation, which seems to be the essential function of trans-translation. The chain is SsrA-binding protein from Corynebacterium jeikeium (strain K411).